The sequence spans 349 residues: UDP-3-O-acylglucosamine N-acyltransferase (349 aa).

The active-site Proton acceptor is the histidine 248.

It belongs to the transferase hexapeptide repeat family. LpxD subfamily. In terms of assembly, homotrimer.

It carries out the reaction a UDP-3-O-[(3R)-3-hydroxyacyl]-alpha-D-glucosamine + a (3R)-hydroxyacyl-[ACP] = a UDP-2-N,3-O-bis[(3R)-3-hydroxyacyl]-alpha-D-glucosamine + holo-[ACP] + H(+). It functions in the pathway bacterial outer membrane biogenesis; LPS lipid A biosynthesis. Functionally, catalyzes the N-acylation of UDP-3-O-acylglucosamine using 3-hydroxyacyl-ACP as the acyl donor. Is involved in the biosynthesis of lipid A, a phosphorylated glycolipid that anchors the lipopolysaccharide to the outer membrane of the cell. The polypeptide is UDP-3-O-acylglucosamine N-acyltransferase (Colwellia psychrerythraea (strain 34H / ATCC BAA-681) (Vibrio psychroerythus)).